The chain runs to 522 residues: MGSVESSNQMNGSIENKTNKIDISVLRPLPTRSNSSISLSSSSHSSFSRMGSLGSLPTNSGSSSPYYNNSSFDLVDEERIKSSIYNLKNHIKCIHKIKEEFRLLEESVGPSETSEGDKKHNTSKNRYTNILPVNHTRVQLKKIQDKEGSDYINANYIDGAYPKQFICTQGPLPNTIADFWRMVWENRCRIIVMLSRESENCRIKCDRYWPEQIGGEQFSIYGNGNEVFGTYSVELVEVIQDPEREIITRNIRLTFEGETRDITQYQYEGWPDHNIPDHTQPFRQLLHSITNRQNQIIPSSDRNVPIIVHCSAGVGRTGTFCTAVIMMKKLDHYFKQLDATPIDQVVDPFTHLPITEYQSDNLDLKGLGYHFKSSIYNSNGINNNNNNNLNNNNNINNNSNGSNNTPQTEPNNEEDDDDAAESDLKYAIMDKYNSRIDFNLFSIVLKLREQRPGMVQQLEQYLFCYKTILDEIYHRLNCKLGFSLPHVNNINNYNNYSNTTTTTTSSLASTTIIHPSTNSKLN.

Positions 32–63 (RSNSSISLSSSSHSSFSRMGSLGSLPTNSGSS) are disordered. The span at 33-63 (SNSSISLSSSSHSSFSRMGSLGSLPTNSGSS) shows a compositional bias: low complexity. A Tyrosine-protein phosphatase domain is found at 97 to 471 (IKEEFRLLEE…LFCYKTILDE (375 aa)). C310 functions as the Phosphocysteine intermediate in the catalytic mechanism. Residues 327-426 (MKKLDHYFKQ…DDAAESDLKY (100 aa)) form a PTPase insert (Asn-rich) region. The span at 382-410 (NNNNNNNLNNNNNINNNSNGSNNTPQTEP) shows a compositional bias: low complexity. A disordered region spans residues 382–420 (NNNNNNNLNNNNNINNNSNGSNNTPQTEPNNEEDDDDAA). Over residues 411–420 (NNEEDDDDAA) the composition is skewed to acidic residues.

The protein belongs to the protein-tyrosine phosphatase family. Non-receptor class subfamily. As to expression, expressed predominantly in anterior-like cells and to a lesser degree in prestalk cells.

It is found in the cytoplasm. It localises to the cell membrane. The catalysed reaction is O-phospho-L-tyrosyl-[protein] + H2O = L-tyrosyl-[protein] + phosphate. Functionally, may have a role in growth and in the early stages of development. Affects the timing of development. The chain is Tyrosine-protein phosphatase 1 (ptpA1-1) from Dictyostelium discoideum (Social amoeba).